We begin with the raw amino-acid sequence, 406 residues long: MSKWKDVKKVVLAYSGGLDTSIILKWLQTELGAEVVTFTADLGQGEELEPARKKAEMLGIKEIFIEDVREEFVRDFVFPMFRANAVYEGVYLLGTSIARPLISKHLIDIAKKTGADAIAHGATGKGNDQVRFELSAYALNPDIKIIAPWRDWSFKSRTQLLEFAEQHQIPVAKDKKGEAPFSVDANLLHSSSEGKVLEDPSQEAPEYVHMRTISPETAPDKATIIKIGFEKGDAVSINGERLSPATLLAKLNDYGRDNGIGRLDLVENRFVGMKSRGVYETPGGTILLAAHRAIESITLDRGAAHLKDELMPRYAELIYYGFWFSPEREMLQAAIDHSQHHVEGEVTLKLYKGNVMVIGRESAKSLYSDKLVTFEDDQGAYDQKDAAGFIKLNALRLRTLAARDRK.

ATP is bound by residues 13-21 (AYSGGLDTS) and alanine 40. 2 residues coordinate L-citrulline: tyrosine 91 and serine 96. Glycine 121 lines the ATP pocket. Threonine 123, asparagine 127, and aspartate 128 together coordinate L-aspartate. Residue asparagine 127 coordinates L-citrulline. Residues arginine 131, serine 182, serine 191, glutamate 267, and tyrosine 279 each contribute to the L-citrulline site.

Belongs to the argininosuccinate synthase family. Type 1 subfamily. In terms of assembly, homotetramer.

Its subcellular location is the cytoplasm. It carries out the reaction L-citrulline + L-aspartate + ATP = 2-(N(omega)-L-arginino)succinate + AMP + diphosphate + H(+). The protein operates within amino-acid biosynthesis; L-arginine biosynthesis; L-arginine from L-ornithine and carbamoyl phosphate: step 2/3. The polypeptide is Argininosuccinate synthase (Brucella suis biovar 1 (strain 1330)).